A 230-amino-acid polypeptide reads, in one-letter code: Probable fimbrial chaperone SfmC (230 aa).

Residues 1-23 (MMTKIKLLMLIIFYLIISASAHA) form the signal peptide.

Belongs to the periplasmic pilus chaperone family.

The protein resides in the periplasm. Its function is as follows. Part of the sfmACDHF fimbrial operon. Could contribute to adhesion to various surfaces in specific environmental niches. Increases adhesion to eukaryotic T24 bladder epithelial cells in the absence of fim genes. The sequence is that of Probable fimbrial chaperone SfmC (sfmC) from Escherichia coli (strain K12).